Reading from the N-terminus, the 283-residue chain is Phosphatidylglycerol--prolipoprotein diacylglyceryl transferase (283 aa).

4 helical membrane-spanning segments follow: residues Ile-19 to Val-39, Leu-59 to Gln-79, Ile-90 to Ala-110, and Val-120 to Gly-140. Arg-141 contributes to the a 1,2-diacyl-sn-glycero-3-phospho-(1'-sn-glycerol) binding site. 3 helical membrane passes run Thr-181–Phe-201, Val-212–Gly-232, and Ile-245–Tyr-265.

The protein belongs to the Lgt family.

The protein localises to the cell inner membrane. It catalyses the reaction L-cysteinyl-[prolipoprotein] + a 1,2-diacyl-sn-glycero-3-phospho-(1'-sn-glycerol) = an S-1,2-diacyl-sn-glyceryl-L-cysteinyl-[prolipoprotein] + sn-glycerol 1-phosphate + H(+). It functions in the pathway protein modification; lipoprotein biosynthesis (diacylglyceryl transfer). In terms of biological role, catalyzes the transfer of the diacylglyceryl group from phosphatidylglycerol to the sulfhydryl group of the N-terminal cysteine of a prolipoprotein, the first step in the formation of mature lipoproteins. The protein is Phosphatidylglycerol--prolipoprotein diacylglyceryl transferase of Nostoc sp. (strain PCC 7120 / SAG 25.82 / UTEX 2576).